The chain runs to 483 residues: Nucleolar protein 4 (483 aa).

2 disordered regions span residues 210-418 (QQDE…PIPS) and 435-483 (SESR…DPQI). The span at 211–225 (QDEDESSIESDEFDM) shows a compositional bias: acidic residues. 3 stretches are compositionally biased toward polar residues: residues 229–254 (TRMS…TVHG), 262–271 (AESSNGNETL), and 302–317 (QPLN…QLTS). 2 stretches are compositionally biased toward basic and acidic residues: residues 319 to 330 (FRIDDQGSDGKN) and 340 to 350 (LKMEREARENG). Residues 351–363 (SKSPAHSYSSYDS) are compositionally biased toward polar residues. Composition is skewed to basic and acidic residues over residues 364–374 (GKNESVDRGAE), 391–409 (HEDS…ERLK), and 435–451 (SESR…KAQD). Over residues 467–483 (ATYSTATVPGSQEDPQI) the composition is skewed to polar residues.

The protein localises to the nucleus. The protein resides in the nucleolus. This Mus musculus (Mouse) protein is Nucleolar protein 4 (Nol4).